The following is a 255-amino-acid chain: Accessory gland-specific peptide 26Aa (255 aa).

A signal peptide spans 1–18 (MNLILLCSQILLLLFTVA). The interval 86–110 (PINNSKSRKNSSTLPSQILTDKPNQ) is disordered. Residues 87 to 110 (INNSKSRKNSSTLPSQILTDKPNQ) are compositionally biased toward polar residues. N-linked (GlcNAc...) asparagine glycans are attached at residues Asn-88, Asn-95, and Asn-136. 2 disordered regions span residues 177 to 196 (NAQN…SKDI) and 235 to 255 (NNPA…PSTT). Residues 183-192 (KSTKSCKKRP) show a composition bias toward basic residues. Positions 245–255 (KSPSEGNPSTT) are enriched in polar residues.

It undergoes several cleavages as it is secreted and it is further processed in the recipient female. In terms of tissue distribution, main cells of the accessory glands of males.

The protein localises to the secreted. Its subcellular location is the extracellular space. Its function is as follows. This protein is transferred from male to female's hemolymph during mating, affecting egglaying and behavior after mating. The polypeptide is Accessory gland-specific peptide 26Aa (Acp26Aa) (Drosophila sechellia (Fruit fly)).